We begin with the raw amino-acid sequence, 182 residues long: Large ribosomal subunit protein uL6 (182 aa).

The protein belongs to the universal ribosomal protein uL6 family. In terms of assembly, part of the 50S ribosomal subunit.

Its function is as follows. This protein binds to the 23S rRNA, and is important in its secondary structure. It is located near the subunit interface in the base of the L7/L12 stalk, and near the tRNA binding site of the peptidyltransferase center. In Nostoc sp. (strain PCC 7120 / SAG 25.82 / UTEX 2576), this protein is Large ribosomal subunit protein uL6.